We begin with the raw amino-acid sequence, 422 residues long: Killer cell immunoglobulin-like receptor 3DL1 (422 aa).

Positions 1 to 21 are cleaved as a signal peptide; sequence MMFEFLSLLCSGFFLVQRMSA. The Extracellular segment spans residues 22 to 329; it reads HMGSYDKPFL…KNLHIQIGLL (308 aa). 3 Ig-like C2-type domains span residues 42-100, 135-202, and 237-300; these read GQNV…HHQY, GENV…YNHS, and EQNM…FKNS. N-linked (GlcNAc...) asparagine glycosylation occurs at Asn-44. Cys-49 and Cys-95 are disulfide-bonded. N-linked (GlcNAc...) asparagine glycosylation occurs at Asn-137. Cys-142 and Cys-195 are joined by a disulfide. N-linked (GlcNAc...) asparagine glycosylation is found at Asn-200 and Asn-239. Cysteines 244 and 293 form a disulfide. A glycan (N-linked (GlcNAc...) asparagine) is linked at Asn-299. The helical transmembrane segment at 330-350 threads the bilayer; it reads VTMVLVIVVIIIIIIIIIIII. The Cytoplasmic segment spans residues 351–422; it reads YYYYFSKKSS…DTVVYTEVMI (72 aa).

It belongs to the immunoglobulin superfamily.

It is found in the cell membrane. In terms of biological role, receptor on natural killer (NK) cells. Inhibits the activity of NK cells thus preventing cell lysis. The chain is Killer cell immunoglobulin-like receptor 3DL1 (Kir3dl1) from Rattus norvegicus (Rat).